We begin with the raw amino-acid sequence, 1427 residues long: Double-stranded DNA deaminase toxin A (1427 aa).

A run of 2 helical transmembrane segments spans residues 16–36 (ALAG…AVAF) and 43–63 (FGVA…LLSI). YD repeat units follow at residues 469-501 (RVVE…DGRT), 548-584 (YDDA…GPDG), 720-747 (NARG…GRLR), and 977-1008 (YDGA…ISRA). Positions 1264-1427 (IGLNGGANVY…SPKSPTKGGC (164 aa)) are C-terminal effector domain, has cytidine deaminase activity. Zn(2+)-binding residues include His1345, Cys1373, and Cys1376. The tract at residues 1402-1427 (KRGATGETKVFTGNSNSPKSPTKGGC) is disordered. Polar residues predominate over residues 1412–1421 (FTGNSNSPKS).

This sequence belongs to the RHS/WapA nuclease family. The toxic domain forms a 1:1 complex with the DddI immunity protein.

It localises to the membrane. The enzyme catalyses a 2'-deoxycytidine in double-stranded DNA + H2O + H(+) = a 2'-deoxyuridine in double-stranded DNA + NH4(+). Toxic component of a toxin-immunity protein module, which functions as a cellular contact-dependent growth inhibition (CDI) system. CDI modules allow bacteria to communicate with and inhibit the growth of closely related neighboring bacteria in a contact-dependent fashion. Bacteria that have this module inhibit or kill bacteria without it, giving them a growth advantage. Probably specifically inhibited by cognate immunity protein DddI. The C-terminal 163 residue fragment has double-stranded DNA cytidine deaminase activity; it does not deaminate ssDNA, ssRNA or dsRNA. Leads to C:G to T:A conversions in deaminated DNA. Preferentially deaminates 5'-TC-3' substrates. This chain is Double-stranded DNA deaminase toxin A, found in Burkholderia cenocepacia (strain H111).